The chain runs to 755 residues: DNA ligase 1 (755 aa).

Residues 1-44 (MRRLLTGCLLSSARPLKSRLPLLMSSSLPSSAGKKPKQATLARF) constitute a mitochondrion transit peptide. The residue at position 2 (Arg-2) is an N-acetylserine. The span at 47–60 (SMKNKPTEGTPSPK) shows a compositional bias: polar residues. 2 disordered regions span residues 47–79 (SMKNKPTEGTPSPKKSSKHMLEDRMDNVSGEEE) and 97–127 (PSSMGSNFSSIPSSAPSSGVADSPQQSQRLV). Residues Ser-58 and Ser-75 each carry the phosphoserine modification. Low complexity predominate over residues 102–114 (SNFSSIPSSAPSS). 2 positions are modified to phosphoserine: Ser-119 and Ser-123. The segment at 309–318 (KLRIGLAEKT) is interaction with target DNA. Glu-417 contributes to the ATP binding site. Lys-419 acts as the N6-AMP-lysine intermediate in catalysis. Residues Arg-424 and Arg-440 each coordinate ATP. Residue Glu-472 coordinates Mg(2+). Residues 493–495 (KRK) form an interaction with target DNA region. Glu-571 is a binding site for Mg(2+). ATP contacts are provided by Lys-576, Arg-590, and Lys-596.

It belongs to the ATP-dependent DNA ligase family. It depends on Mg(2+) as a cofactor.

It is found in the mitochondrion. The protein localises to the nucleus. The catalysed reaction is ATP + (deoxyribonucleotide)n-3'-hydroxyl + 5'-phospho-(deoxyribonucleotide)m = (deoxyribonucleotide)n+m + AMP + diphosphate.. Functionally, DNA ligase that seals nicks in double-stranded DNA during DNA replication, DNA recombination and DNA repair. The mitochondrial form is required for mitochondrial DNA maintenance but is non-essential while the nuclear form is essential for cell viability. This chain is DNA ligase 1 (CDC9), found in Saccharomyces cerevisiae (strain ATCC 204508 / S288c) (Baker's yeast).